Consider the following 618-residue polypeptide: Auxin efflux carrier component 3a (618 aa).

Residues 1-6 (MISGHD) are Extracellular-facing. A helical transmembrane segment spans residues 7–27 (FYTVMAAVVPLYVAMFLAYGS). The Cytoplasmic portion of the chain corresponds to 28–38 (VRWWGIFTPDQ). A helical membrane pass occupies residues 39 to 59 (CSGINRFVAIFAVPLLSFHFI). Residue Val-51 coordinates (indol-3-yl)acetate. Over 60–70 (STNDPYAMNLR) the chain is Extracellular. Residues 71-90 (FLAADTLQKLLVLAGLAAWS) form a helical membrane-spanning segment. The Cytoplasmic segment spans residues 91 to 104 (RLPSRTGAPRLDWS). A helical transmembrane segment spans residues 105-125 (ITLFSLSTLPNTLVMGIPLLI). Residues Asn-115 and Leu-117 each coordinate (indol-3-yl)acetate. The Extracellular segment spans residues 126 to 134 (AMYGPYSGS). The helical transmembrane segment at 135 to 155 (LMVQIVVLQCIIWYTLMLFLF) threads the bilayer. Tyr-148 serves as a coordination point for (indol-3-yl)acetate. The Cytoplasmic segment spans residues 156-478 (EFRAARMLIA…LIRNPNTYSS (323 aa)). Residues 281–293 (SLQSSRGPTPRQS) are compositionally biased toward polar residues. A disordered region spans residues 281–312 (SLQSSRGPTPRQSNFDEHSARPPKPPATTTGA). The chain crosses the membrane as a helical span at residues 479 to 499 (LLGLAWSLVAFRWHVSMPAIV). Topologically, residues 500–502 (EKS) are extracellular. A helical membrane pass occupies residues 503 to 523 (ISILSDAGLGMAMFSLGLFMA). Residues 524–539 (LQPSIIACGKSAAVVS) lie on the Cytoplasmic side of the membrane. A helical transmembrane segment spans residues 540–560 (MAVRFLAGPAVMAAASIAIGL). The Extracellular segment spans residues 561–563 (RGT). A helical membrane pass occupies residues 564-584 (LLHVAIVQAALPQGIVPFVFA). The (indol-3-yl)acetate site is built by Ile-578 and Val-579. Residues 585-597 (KEYNVHPAILSTA) are Cytoplasmic-facing. The helical transmembrane segment at 598–618 (VIFGMLIALPITLLYYILLGL) threads the bilayer.

The protein belongs to the auxin efflux carrier (TC 2.A.69.1) family. Homodimer. In terms of tissue distribution, expressed in coleoptiles, roots, vascular bundles of leaves, shoots, lamina joints and vascular bundles of the lemma and filament. Expressed in stem bases, stems, leaves and young panicles.

The protein resides in the cell membrane. Acts as a component of the auxin efflux carrier. Involved in the polar auxin transport which may regulate crown root development and response to water stress. The chain is Auxin efflux carrier component 3a from Oryza sativa subsp. japonica (Rice).